We begin with the raw amino-acid sequence, 183 residues long: Adenine phosphoribosyltransferase (183 aa).

It belongs to the purine/pyrimidine phosphoribosyltransferase family. In terms of assembly, homodimer.

The protein resides in the cytoplasm. It catalyses the reaction AMP + diphosphate = 5-phospho-alpha-D-ribose 1-diphosphate + adenine. It participates in purine metabolism; AMP biosynthesis via salvage pathway; AMP from adenine: step 1/1. Its function is as follows. Catalyzes a salvage reaction resulting in the formation of AMP, that is energically less costly than de novo synthesis. The protein is Adenine phosphoribosyltransferase of Salmonella paratyphi C (strain RKS4594).